A 296-amino-acid chain; its full sequence is Transcription factor Pur-alpha 1 (296 aa).

N-acetylmethionine is present on methionine 1. Disordered stretches follow at residues 1–25 (MEAN…GGGG) and 186–214 (IPGH…EETG). Serine 207 carries the post-translational modification Phosphoserine.

It belongs to the PUR DNA-binding protein family. In terms of assembly, homodimer. Interacts with TCP20.

It localises to the nucleus. Functionally, transcription factor that specifically binds the purine-rich double-stranded telomeric repeated sequence 5'-AAACCCTAA-3' found in promoter telo boxes. In Arabidopsis thaliana (Mouse-ear cress), this protein is Transcription factor Pur-alpha 1 (PURA1).